A 161-amino-acid chain; its full sequence is MKAVYPGSFDPITLGHVDIIKRALSIFDELVVLVTENPRKKCMFTLEERKKLIEEVLSDLDGVKVDVHHGLLVDYLKKHGIKVLVRGLRAVTDYEYELQMALANKKLYSDLETVFLIASEKFSFISSSLVKEVALYGGDVTEWVPPEVARALNEKLKEGKR.

Substrate is bound at residue Ser-8. ATP is bound by residues 8-9 (SF) and His-16. Substrate-binding positions include 36 to 40 (ENPRK), Leu-72, and Arg-86. ATP is bound by residues 87–89 (GLR), Glu-97, and 122–128 (FSFISSS). A substrate-binding site is contributed by Glu-132.

This sequence belongs to the bacterial CoaD family. Homohexamer. It depends on Mg(2+) as a cofactor.

The protein resides in the cytoplasm. The catalysed reaction is (R)-4'-phosphopantetheine + ATP + H(+) = 3'-dephospho-CoA + diphosphate. Its pathway is cofactor biosynthesis; coenzyme A biosynthesis; CoA from (R)-pantothenate: step 4/5. Functionally, reversibly transfers an adenylyl group from ATP to 4'-phosphopantetheine, yielding dephospho-CoA (dPCoA) and pyrophosphate. In Thermotoga maritima (strain ATCC 43589 / DSM 3109 / JCM 10099 / NBRC 100826 / MSB8), this protein is Phosphopantetheine adenylyltransferase.